A 193-amino-acid polypeptide reads, in one-letter code: Protein SINE3 (193 aa).

The disordered stretch occupies residues 15–35 (SELGAKRLKDPEMKNRKVTTE). Residues 18–35 (GAKRLKDPEMKNRKVTTE) show a composition bias toward basic and acidic residues. The 39-residue stretch at 155-193 (VTVKFRIVLLSFILWAILAAIVVFFSSGEERAYRGPLPT) folds into the KASH domain. A helical transmembrane segment spans residues 161–181 (IVLLSFILWAILAAIVVFFSS). The Required for nuclear localization motif lies at 190–193 (PLPT).

In terms of assembly, interacts with SUN1 and SUN2.

It is found in the nucleus membrane. This Arabidopsis thaliana (Mouse-ear cress) protein is Protein SINE3.